The chain runs to 595 residues: Aspartate--tRNA(Asp/Asn) ligase (595 aa).

Glutamate 175 contributes to the L-aspartate binding site. The segment at 199-202 is aspartate; that stretch reads QQYK. The L-aspartate site is built by arginine 221 and histidine 454. 221-223 contacts ATP; it reads RDE. An ATP-binding site is contributed by glutamate 488. L-aspartate is bound at residue arginine 495. 540–543 lines the ATP pocket; it reads GIDR.

This sequence belongs to the class-II aminoacyl-tRNA synthetase family. Type 1 subfamily. Homodimer.

The protein localises to the cytoplasm. The enzyme catalyses tRNA(Asx) + L-aspartate + ATP = L-aspartyl-tRNA(Asx) + AMP + diphosphate. Its function is as follows. Aspartyl-tRNA synthetase with relaxed tRNA specificity since it is able to aspartylate not only its cognate tRNA(Asp) but also tRNA(Asn). Reaction proceeds in two steps: L-aspartate is first activated by ATP to form Asp-AMP and then transferred to the acceptor end of tRNA(Asp/Asn). This is Aspartate--tRNA(Asp/Asn) ligase from Brucella abortus (strain S19).